Consider the following 210-residue polypeptide: Putative protein-lysine deacylase ABHD14B (210 aa).

Position 91 is a phosphoserine (Ser-91). Residues Ser-111, Asp-162, and His-188 each act as charge relay system in the active site.

The protein belongs to the AB hydrolase superfamily. ABHD14 family. In terms of assembly, may interact with TAF1.

The protein localises to the cytoplasm. It localises to the nucleus. The catalysed reaction is L-lysyl-[protein] + acetyl-CoA = N(6)-acetyl-L-lysyl-[protein] + CoA + H(+). In terms of biological role, acts as an atypical protein-lysine deacetylase in vitro. Catalyzes the deacetylation of lysine residues using CoA as substrate, generating acetyl-CoA and the free amine of protein-lysine residues. Additional experiments are however required to confirm the protein-lysine deacetylase activity in vivo. Has hydrolase activity towards various surrogate p-nitrophenyl (pNp) substrates, such as pNp-butyrate, pNp-acetate and pNp-octanoate in vitro, with a strong preference for pNp-acetate. May activate transcription. This is Putative protein-lysine deacylase ABHD14B from Rattus norvegicus (Rat).